Reading from the N-terminus, the 563-residue chain is MSTQILASSSQNEKIHKILRPTKKFQPPVWGERFLHYNISEQELRYKQQQVEELKEVVKKEIFGESAYDVSHQLKLINVVERLGLSYHFESEIENELESIYNKSVGQNYILKDENLHDASLRFRLLRQHGFRVSSPDIFEKFKDEDGNFKECLVSDTIGLLSLYEASHLSCVGENILDEALAFTTTHLTEFLANKKEHDDPLSREISQALERPLRKSLERLAARHFISIYENETSHNKVLLQLAKLDFNLLQSIHKKELSEISRWWKESDFVLKFPFARERIVELYLWILGAYYEPQYSMARNVLTKIIAFASLADDIYDEYGTFEELELLTEAVERWDIYIIDKLNPEYLQTFYKELLNSYEEFEQELPKEETYRVHYAKERFKELLRSYLEEAWWLKEERVPSFDEYLKISLISCGYHMLIVSSLIGMKSSIVTKEVFEWLSMDRKIIRASSTICRFMDDLAEHKFEQEKNDEPTAVECYMKQYGVSEEEAYDELNKQIANAWKEINEELLKPTGVASPILVRVLNFSKFMDLFYKNGDSYTQVGKVAKDSVAALLIDPIP.

Mg(2+) contacts are provided by Asp-316, Asp-320, Asp-461, and Glu-469. Residues 316–320 carry the DDXXD motif motif; that stretch reads DDIYD.

It belongs to the terpene synthase family. Tpsa subfamily. Mg(2+) is required as a cofactor. It depends on Mn(2+) as a cofactor. Expressed in trichomes, cones and young leaves.

It catalyses the reaction (2E,6E)-farnesyl diphosphate = alpha-humulene + diphosphate. It functions in the pathway sesquiterpene biosynthesis. The protein operates within secondary metabolite biosynthesis; terpenoid biosynthesis. In terms of biological role, sesquiterpene synthase that catalyzes the formation of alpha-humulene. Can use farnesyl diphosphate (FPP) as substrate, but not geranyl diphosphate (GPP) or geranylgeranyl diphosphate (GGPP). In Humulus lupulus (European hop), this protein is Alpha-humulene synthase.